We begin with the raw amino-acid sequence, 775 residues long: Subtilisin-like protease SBT3.8 (775 aa).

A signal peptide spans 1–26 (MKSCRTLIFVAIILNGLSTFVAHAGA). Residues 27 to 109 (ESKVHIVYLG…VTPDSFYQLD (83 aa)) constitute a propeptide, activation peptide. The 79-residue stretch at 30-108 (VHIVYLGEKQ…HVTPDSFYQL (79 aa)) folds into the Inhibitor I9 domain. One can recognise a Peptidase S8 domain in the interval 113–622 (TWDYLGLSVA…GGLVNPEKAA (510 aa)). N129 is a glycosylation site (N-linked (GlcNAc...) asparagine). D143 serves as the catalytic Charge relay system. N-linked (GlcNAc...) asparagine glycosylation is found at N174 and N202. Catalysis depends on H218, which acts as the Charge relay system. The region spanning 384–476 (SLVYPENPGN…VDYELGTDIL (93 aa)) is the PA domain. Residues N395, N410, and N538 are each glycosylated (N-linked (GlcNAc...) asparagine). S553 (charge relay system) is an active-site residue. 3 N-linked (GlcNAc...) asparagine glycosylation sites follow: N645, N721, and N756.

This sequence belongs to the peptidase S8 family.

The protein localises to the secreted. This chain is Subtilisin-like protease SBT3.8, found in Arabidopsis thaliana (Mouse-ear cress).